The following is a 323-amino-acid chain: Pseudouridine-5'-phosphate glycosidase (323 aa).

Glu43 serves as the catalytic Proton donor. Substrate-binding residues include Lys104 and Val124. Asp156 contributes to the Mn(2+) binding site. A substrate-binding site is contributed by 158–160; sequence SAD. The active-site Nucleophile is the Lys177.

The protein belongs to the pseudouridine-5'-phosphate glycosidase family. As to quaternary structure, homotrimer. Requires Mn(2+) as cofactor.

It carries out the reaction D-ribose 5-phosphate + uracil = psi-UMP + H2O. Functionally, catalyzes the reversible cleavage of pseudouridine 5'-phosphate (PsiMP) to ribose 5-phosphate and uracil. Functions biologically in the cleavage direction, as part of a pseudouridine degradation pathway. The sequence is that of Pseudouridine-5'-phosphate glycosidase from Streptomyces griseus subsp. griseus (strain JCM 4626 / CBS 651.72 / NBRC 13350 / KCC S-0626 / ISP 5235).